The chain runs to 408 residues: MAENGDNEKMAALEAKICHQIEYYFGDFNLPRDKFLKEQIKLDEGWVPLEIMIKFNRLNRLTTDFNVIVEALSKSKAELMEISEDKTKIRRSPSKPLPEVTDEYKNDVKNRSVYIKGFPTDATLDDIKEWLEDKGQVLNIQMRRTLHKAFKGSIFVVFDSIESAKKFVETPGQKYKETDLLILFKDDYFAKKNEERKQNKVEAKLRAKQEQEAKQKLEEDAEMKSLEEKIGCLLKFSGDLDDQTCREDLHILFSNHGEIKWIDFVRGAKEGIILFKEKAKEALGKAKDANNGNLQLRNKEVTWEVLEGEVEKEALKKIIEDQQESLNKWKSKGRRFKGKGKGNKAAQPGSGKGKVQFQGKKTKFASDDEHDEHDENGATGPVKRAREETDKEEPASKQQKTENGAGDQ.

The HTH La-type RNA-binding domain maps to 7–99 (NEKMAALEAK…RRSPSKPLPE (93 aa)). 2 positions are modified to phosphoserine: Ser92 and Ser94. In terms of domain architecture, RRM spans 111-187 (RSVYIKGFPT…TDLLILFKDD (77 aa)). Lys116 carries the post-translational modification N6-acetyllysine. Thr120 is subject to Phosphothreonine. Lys128 is subject to N6-acetyllysine. Ser225 carries the phosphoserine modification. The xRRM domain occupies 227-348 (EEKIGCLLKF…KGKGNKAAQP (122 aa)). 3 positions are modified to N6-acetyllysine: Lys328, Lys341, and Lys360. The segment covering 329–342 (WKSKGRRFKGKGKG) has biased composition (basic residues). Residues 329-408 (WKSKGRRFKG…QKTENGAGDQ (80 aa)) are disordered. At Thr362 the chain carries Phosphothreonine. At Ser366 the chain carries Phosphoserine; by CK2. Positions 384 to 395 (RAREETDKEEPA) are enriched in basic and acidic residues.

Interacts with DDX15. May interact with RUFY1. Post-translationally, phosphorylated. The phosphorylation sites are at the C-terminal part of the protein. In terms of processing, the N-terminus is blocked.

Its subcellular location is the nucleus. In terms of biological role, binds to the 3' poly(U) terminus of nascent RNA polymerase III transcripts, protecting them from exonuclease digestion and facilitating their folding and maturation. In case of Coxsackievirus B3 infection, binds to the viral internal ribosome entry site (IRES) and stimulates the IRES-mediated translation. The protein is Lupus La protein (SSB) of Homo sapiens (Human).